The chain runs to 203 residues: MNRLFRLLPLASLVLTACSLHTPQGPGKSPDSPQWRQHQQAVRSLNQFQTRGAFAYLSDEQKVYARFFWQQTGQDRYRLLLTNPLGSTELSLTAQPGSVQLIDNKGQTYTATDAEEMIGRLTGMPIPLNSLRQWIIGLPGDATDYSLDDQYRLRELNYTQNGKTWHVTYGGYTSDTQPALPSNVELNNGAQRIKLKMDNWIVK.

The N-terminal stretch at 1-17 (MNRLFRLLPLASLVLTA) is a signal peptide. Cys-18 carries the N-palmitoyl cysteine lipid modification. Cys-18 carries the S-diacylglycerol cysteine lipid modification.

This sequence belongs to the LolB family. As to quaternary structure, monomer.

The protein resides in the cell outer membrane. Plays a critical role in the incorporation of lipoproteins in the outer membrane after they are released by the LolA protein. This Klebsiella pneumoniae (strain 342) protein is Outer-membrane lipoprotein LolB.